A 1398-amino-acid polypeptide reads, in one-letter code: DNA-directed RNA polymerase subunit beta' (1398 aa).

The Zn(2+) site is built by cysteine 71, cysteine 73, cysteine 86, and cysteine 89. Aspartate 462, aspartate 464, and aspartate 466 together coordinate Mg(2+). Zn(2+) is bound by residues cysteine 810, cysteine 884, cysteine 891, and cysteine 894.

It belongs to the RNA polymerase beta' chain family. In terms of assembly, the RNAP catalytic core consists of 2 alpha, 1 beta, 1 beta' and 1 omega subunit. When a sigma factor is associated with the core the holoenzyme is formed, which can initiate transcription. Mg(2+) serves as cofactor. The cofactor is Zn(2+).

The enzyme catalyses RNA(n) + a ribonucleoside 5'-triphosphate = RNA(n+1) + diphosphate. Its function is as follows. DNA-dependent RNA polymerase catalyzes the transcription of DNA into RNA using the four ribonucleoside triphosphates as substrates. The sequence is that of DNA-directed RNA polymerase subunit beta' from Mesorhizobium japonicum (strain LMG 29417 / CECT 9101 / MAFF 303099) (Mesorhizobium loti (strain MAFF 303099)).